The sequence spans 595 residues: APOBEC1 complementation factor (595 aa).

3 consecutive RRM domains span residues 56-134 (CEIF…ASVD), 136-218 (CRLF…WAEP), and 231-303 (KILY…LAKP). A required for nuclear localization region spans residues 360–409 (HFPATKGHLSNRALIRTPSVREIYMNVPVGAAGVRGLGGRGYLAYTGLGR).

In terms of assembly, part of the apolipoprotein B mRNA editing complex with APOBEC1. Interacts with TNPO2; TNPO2 may be responsible for transport of A1CF into the nucleus. Interacts with SYNCRIP. Interacts with CELF2/CUGBP2. Interacts with RBM47. In terms of tissue distribution, expressed primarily in liver, small intestine and kidney.

It is found in the nucleus. It localises to the endoplasmic reticulum. Its subcellular location is the cytoplasm. Its function is as follows. Essential component of the apolipoprotein B mRNA editing enzyme complex which is responsible for the postranscriptional editing of a CAA codon for Gln to a UAA codon for stop in APOB mRNA. Binds to APOB mRNA and is probably responsible for docking the catalytic subunit, APOBEC1, to the mRNA to allow it to deaminate its target cytosine. The complex also seems to protect the edited APOB mRNA from nonsense-mediated decay. This chain is APOBEC1 complementation factor (A1cf), found in Mus musculus (Mouse).